Here is a 62-residue protein sequence, read N- to C-terminus: UPF0291 protein CLD_1956 (62 aa).

It belongs to the UPF0291 family.

Its subcellular location is the cytoplasm. This chain is UPF0291 protein CLD_1956, found in Clostridium botulinum (strain Okra / Type B1).